A 239-amino-acid chain; its full sequence is Ribosomal RNA large subunit methyltransferase E (239 aa).

The interval 1 to 20 is disordered; the sequence is MTKAPIAGNRTGRKLGQRVK. Basic residues predominate over residues 11-20; it reads TGRKLGQRVK. 5 residues coordinate S-adenosyl-L-methionine: Gly-81, Trp-83, Asp-104, Asp-120, and Asp-144. Residue Lys-184 is the Proton acceptor of the active site.

This sequence belongs to the class I-like SAM-binding methyltransferase superfamily. RNA methyltransferase RlmE family.

The protein resides in the cytoplasm. It carries out the reaction uridine(2552) in 23S rRNA + S-adenosyl-L-methionine = 2'-O-methyluridine(2552) in 23S rRNA + S-adenosyl-L-homocysteine + H(+). Functionally, specifically methylates the uridine in position 2552 of 23S rRNA at the 2'-O position of the ribose in the fully assembled 50S ribosomal subunit. The chain is Ribosomal RNA large subunit methyltransferase E from Rhizobium etli (strain ATCC 51251 / DSM 11541 / JCM 21823 / NBRC 15573 / CFN 42).